Reading from the N-terminus, the 352-residue chain is N-acetyl-gamma-glutamyl-phosphate reductase (352 aa).

Residue Cys151 is part of the active site.

This sequence belongs to the NAGSA dehydrogenase family. Type 1 subfamily.

The protein localises to the cytoplasm. It catalyses the reaction N-acetyl-L-glutamate 5-semialdehyde + phosphate + NADP(+) = N-acetyl-L-glutamyl 5-phosphate + NADPH + H(+). Its pathway is amino-acid biosynthesis; L-arginine biosynthesis; N(2)-acetyl-L-ornithine from L-glutamate: step 3/4. Catalyzes the NADPH-dependent reduction of N-acetyl-5-glutamyl phosphate to yield N-acetyl-L-glutamate 5-semialdehyde. This is N-acetyl-gamma-glutamyl-phosphate reductase from Renibacterium salmoninarum (strain ATCC 33209 / DSM 20767 / JCM 11484 / NBRC 15589 / NCIMB 2235).